The following is a 293-amino-acid chain: tRNA pseudouridine synthase B (293 aa).

The Nucleophile role is filled by D40.

The protein belongs to the pseudouridine synthase TruB family. Type 1 subfamily.

The enzyme catalyses uridine(55) in tRNA = pseudouridine(55) in tRNA. Its function is as follows. Responsible for synthesis of pseudouridine from uracil-55 in the psi GC loop of transfer RNAs. This is tRNA pseudouridine synthase B from Rickettsia akari (strain Hartford).